Consider the following 272-residue polypeptide: ATP phosphoribosyltransferase regulatory subunit (272 aa).

This sequence belongs to the class-II aminoacyl-tRNA synthetase family. HisZ subfamily. As to quaternary structure, heteromultimer composed of HisG and HisZ subunits.

The protein localises to the cytoplasm. Its pathway is amino-acid biosynthesis; L-histidine biosynthesis; L-histidine from 5-phospho-alpha-D-ribose 1-diphosphate: step 1/9. Functionally, required for the first step of histidine biosynthesis. May allow the feedback regulation of ATP phosphoribosyltransferase activity by histidine. The protein is ATP phosphoribosyltransferase regulatory subunit of Staphylococcus aureus (strain MRSA252).